A 1051-amino-acid polypeptide reads, in one-letter code: MNKLLFLSKKSSTSNLYRFYSRAPINESSIKSSFDPKVVEEFKYKYWQDSGLFKPKSNNGGEKFSMVLPPPNVTGSLHIGHSLTTTIQDSLIRYNRMMGKEVLWVPGLDHSGIATQVAVEKELQVKQGKTRFDLGREKFLEQVFQWTDQYSSNINNQLKITGSSLDWSRSVFTLDEQRNDAVQTAFIRMFEMGLIYRSTRLVNWCPYLQSVISDIEVDHKVIEKPTMLKLKSRKKSVEVGAIHNIAYMMEDPMLAPLIVSTTRPETIFGDTGLAIHPLDERYKDYHGKFAIHPFNHERIPIVLDDILVNREMGTGVVKITPAHDFNDYQCGQRHSLPIVNILNSNGTLNENSTAEFEGVDRLDARSMVIEKLEQMGLYREKLAHPQTLSICSRSGDLLEPVLKPQWYVKCKDMADKSIEFVESGEIKIIPESFRADWSRWLTNIQDWCISRQLWWGNPIPAYRVIMIDKVTNEDLDIHLTETERLKQEKWVVGKNEKEARENVFKTYGIANAGEYRLEKDQDVLDTWFSSGLFPISSMGWPTATKNSDNDNDFSRFLPLDVMETGSDILFFWVARMVMMCSTLNNGEVPFKTILLHPMIRDSQGRKMSKSLGNVIDPLHVINGISLQDLKENLSKSNLSQQEKVTATKGLEKEFPQGIPQCGTDSLRFSLAQYPINGKDINLDISKIIGNRLFCNKLWNASKFVFNYLVNLNNLSINLYYNNNNNEKDQQQPFNYLESTTLIDKWILLKLSKLVEIVNESYKSNNLSIAAQSLYSFFQYDFCDIYIECIKADLSKPILSKQNEHSSLVLASVLDSYLRMLHPFMPFITEDLWQRLPKSKQQLEIANSIEIDDSLSIMISDYPNPSYKYHQLFKNQEIEIEKQVNLFLDTLKLIRSQKVSLGINEKTKLIIKLQIIGDDQILIKSSFNQLKDSFEKLLNSNLIIDENNNNDNNNNNDNNDLTNISINKFTISKELQISIEFDKEINNQLNQKLINPNQSNDKKILKLENFIKQLQDEIDNPDFKQRVPEKVQNIKIEKLNQYKIELKEIYKK.

A mitochondrion-targeting transit peptide spans methionine 1–tyrosine 20. Residues proline 71–histidine 81 carry the 'HIGH' region motif. Positions lysine 606–serine 610 match the 'KMSKS' region motif. An ATP-binding site is contributed by lysine 609. Positions lysine 972–asparagine 1019 form a coiled coil.

This sequence belongs to the class-I aminoacyl-tRNA synthetase family.

The protein localises to the mitochondrion. It carries out the reaction tRNA(Val) + L-valine + ATP = L-valyl-tRNA(Val) + AMP + diphosphate. This is Probable valine--tRNA ligase, mitochondrial (valS2) from Dictyostelium discoideum (Social amoeba).